We begin with the raw amino-acid sequence, 138 residues long: Protein FAM136A (138 aa).

Belongs to the FAM136 family.

This is Protein FAM136A (fam136a) from Xenopus tropicalis (Western clawed frog).